Consider the following 440-residue polypeptide: Cytochrome b (440 aa).

A helical transmembrane segment spans residues 46–66 (IWGIVLAFCLVLQIATGIVLV). Heme b-binding residues include histidine 97 and histidine 111. The next 9 membrane-spanning stretches (helical) occupy residues 100 to 120 (GASLFFLAVYIHIFRGLYYGS), 129 to 149 (WIVGMLIYLMMMGTAFMGYVL), 156 to 176 (FWGATVITGLFGAIPGVGEAI), 194 to 214 (FFSLHYLLPFVIAALVVVHIW), 253 to 273 (LFALAVVLVVFFAIVGFMPNY), 296 to 315 (WYFLPFYAILRAFTADVWVV), 330 to 350 (FFGVIAMFGAILVMALVPWLD), 365 to 385 (WWFWLLAVDFVVLMWVGAMPA), and 394 to 414 (LAGSAYWFAYFLIILPLLGII). Residues histidine 198 and histidine 212 each contribute to the heme b site.

The protein belongs to the cytochrome b family. The main subunits of complex b-c1 are: cytochrome b, cytochrome c1 and the Rieske protein. The cofactor is heme b.

The protein resides in the cell membrane. Functionally, component of the ubiquinol-cytochrome c reductase complex (complex III or cytochrome b-c1 complex), which is a respiratory chain that generates an electrochemical potential coupled to ATP synthesis. The polypeptide is Cytochrome b (petB) (Paracoccus denitrificans).